Reading from the N-terminus, the 445-residue chain is Phosphoglucosamine mutase 1 (445 aa).

Catalysis depends on serine 102, which acts as the Phosphoserine intermediate. Serine 102, aspartate 241, aspartate 243, and aspartate 245 together coordinate Mg(2+). Serine 102 bears the Phosphoserine mark.

Belongs to the phosphohexose mutase family. Mg(2+) is required as a cofactor. Post-translationally, activated by phosphorylation.

The enzyme catalyses alpha-D-glucosamine 1-phosphate = D-glucosamine 6-phosphate. Functionally, catalyzes the conversion of glucosamine-6-phosphate to glucosamine-1-phosphate. The sequence is that of Phosphoglucosamine mutase 1 from Shewanella amazonensis (strain ATCC BAA-1098 / SB2B).